The sequence spans 545 residues: Membrane protein insertase YidC (545 aa).

Residues asparagine 6–aspartate 26 traverse the membrane as a helical segment. The disordered stretch occupies residues serine 44 to threonine 65. The next 4 membrane-spanning stretches (helical) occupy residues leucine 346–leucine 366, glycine 424–leucine 444, leucine 461–methionine 481, and valine 504–glycine 524.

Belongs to the OXA1/ALB3/YidC family. Type 1 subfamily. In terms of assembly, interacts with the Sec translocase complex via SecD. Specifically interacts with transmembrane segments of nascent integral membrane proteins during membrane integration.

It is found in the cell inner membrane. Functionally, required for the insertion and/or proper folding and/or complex formation of integral membrane proteins into the membrane. Involved in integration of membrane proteins that insert both dependently and independently of the Sec translocase complex, as well as at least some lipoproteins. Aids folding of multispanning membrane proteins. The polypeptide is Membrane protein insertase YidC (Shewanella pealeana (strain ATCC 700345 / ANG-SQ1)).